We begin with the raw amino-acid sequence, 103 residues long: MMSYIALAACIGLAMAANVDHDVKSAVNEVTTTKDGDTYCPVPLVGTKCGTSSIFHYWKCCGELNKECCFNLQTWVWVTLALFGVIFIASFVISLVRCICCRK.

The N-terminal stretch at methionine 1–alanine 16 is a signal peptide. Topologically, residues alanine 17 to tryptophan 75 are extracellular. A helical transmembrane segment spans residues valine 76–valine 96. Topologically, residues arginine 97–lysine 103 are cytoplasmic.

As to expression, expressed in a subset of neurons and in body wall muscles. In the nervous system, expressed specifically in cholinergic motor neurons of the ventral nerve cord, a subset of cholinergic head neurons, anterior sublateral neurons, and body sublateral neurons (at protein level).

It localises to the cell membrane. Its subcellular location is the perikaryon. The protein localises to the cell projection. The protein resides in the synapse. It is found in the cytoplasmic vesicle. It localises to the secretory vesicle. Its subcellular location is the synaptic vesicle. Its function is as follows. May be involved in trafficking or stabilization of the vesicular acetylcholine transporter unc-17. In Caenorhabditis elegans, this protein is Protein SUP-1.